The chain runs to 332 residues: Ectoine dioxygenase (332 aa).

The segment covering 1 to 10 (MSVQTSSNRP) has biased composition (polar residues). Residues 1 to 47 (MSVQTSSNRPLPQANLHIATETPEADSRIRSAPRPGQDPYPTRLSEP) are disordered. Glutamine 163 is an L-ectoine binding site. Lysine 169 lines the 2-oxoglutarate pocket. Residues histidine 180, aspartate 182, and histidine 281 each coordinate Fe cation.

The protein belongs to the PhyH family. EctD subfamily. Homodimer. It depends on Fe(2+) as a cofactor.

It carries out the reaction L-ectoine + 2-oxoglutarate + O2 = 5-hydroxyectoine + succinate + CO2. In terms of biological role, involved in the biosynthesis of 5-hydroxyectoine, called compatible solute, which helps organisms to survive extreme osmotic stress by acting as a highly soluble organic osmolyte. Catalyzes the 2-oxoglutarate-dependent selective hydroxylation of L-ectoine to yield (4S,5S)-5-hydroxyectoine. In Halomonas elongata (strain ATCC 33173 / DSM 2581 / NBRC 15536 / NCIMB 2198 / 1H9), this protein is Ectoine dioxygenase.